Reading from the N-terminus, the 120-residue chain is UPF0231 protein YacL (120 aa).

The protein belongs to the UPF0231 family.

The polypeptide is UPF0231 protein YacL (Escherichia coli O81 (strain ED1a)).